Reading from the N-terminus, the 199-residue chain is MENFRKVRSEEAPAGDGDEGGSPNSGPFADLAPGAVHMRVKEGSKIRNLLAFATASMAQPATRAIVFSGCGRATTKTVTCAEILKRRLAGLHQVTRLRYRSVREVWQSLPPGPTPGQTPSDPAASLSVLKNVPSLAILLSKDALDPRQLGYQPPNLSPGPSSPPTVSTSKRSLGESAAEEGTAKRSQPEPEAENEDRTA.

Over residues 1–11 (MENFRKVRSEE) the composition is skewed to basic and acidic residues. Disordered regions lie at residues 1–31 (MENF…FADL) and 146–199 (PRQL…DRTA). Ser172 carries the phosphoserine modification. The segment covering 190–199 (PEAENEDRTA) has biased composition (acidic residues).

This sequence belongs to the histone-like Alba family. Component of nuclear RNase P and RNase MRP ribonucleoproteins. RNase P consists of a catalytic RNA moiety and 10 different protein chains; POP1, POP4, POP5, POP7, RPP14, RPP21, RPP25, RPP30, RPP38 and RPP40. Within the RNase P complex, POP1, POP7 and RPP25 form the 'finger' subcomplex, POP5, RPP14, RPP40 and homodimeric RPP30 form the 'palm' subcomplex, and RPP21, POP4 and RPP38 form the 'wrist' subcomplex. All subunits of the RNase P complex interact with the catalytic RNA. Several subunits of RNase P are also part of the RNase MRP complex. RNase MRP consists of a catalytic RNA moiety and about 8 protein subunits; POP1, POP7, RPP25, RPP30, RPP38, RPP40 and possibly also POP4 and POP5. POP7 forms a heterodimer with RPP25 that binds to the P3 stem loop of the catalytic RNA.

Its subcellular location is the nucleus. The protein resides in the nucleolus. In terms of biological role, component of ribonuclease P, a ribonucleoprotein complex that generates mature tRNA molecules by cleaving their 5'-ends. Also a component of the MRP ribonuclease complex, which cleaves pre-rRNA sequences. The chain is Ribonuclease P protein subunit p25 (Rpp25) from Mus musculus (Mouse).